The chain runs to 342 residues: Peroxisomal membrane protein import receptor PEX19 (342 aa).

Over residues 1–18 the composition is skewed to acidic residues; sequence MNENEYDNFDDLDDLLDE. 2 disordered regions span residues 1–68 and 119–141; these read MNEN…DPEL and CSSL…GFKN. Basic and acidic residues predominate over residues 41-54; sequence SENKEKNAESKDSD. S62 carries the post-translational modification Phosphoserine. Position 304 is a phosphoserine (S304). Residues 321-342 form a disordered region; the sequence is IDGNDPNLGNLDKELTDGCKQQ. A compositionally biased stretch (basic and acidic residues) spans 331–342; sequence LDKELTDGCKQQ. Cysteine methyl ester is present on C339. A lipid anchor (S-farnesyl cysteine) is attached at C339. The propeptide at 340 to 342 is removed in mature form; the sequence is KQQ.

Belongs to the peroxin-19 family. In terms of assembly, interacts (farnesylated) with PEX3; farnesylation is required for this interaction. Interacts with PEX2, PEX5, PEX10, PEX11, PEX12, PEX13, PEX14, PEX17, PEX22, PEX25, PEX30 and PEX32; the interaction requires well-defined PEX19-binding sites within the peroxisomal membrane protein targeting signal (mPTS) of the PMPs and is independent on the presence of PEX3. Interacts with VPS1.

The protein localises to the cytoplasm. The protein resides in the peroxisome membrane. It localises to the endoplasmic reticulum membrane. Its function is as follows. Required for proper post-translational import and stabilization of peroxisomal membrane proteins (PMPs). Acts as a cytosolic import receptor for PMPs and delivers them to the docking factor PEX3 at the peroxisomal membrane for subsequent insertion into the membrane. Acts as a chaperone in stabilizing or maintaining PMPs in the lipid bilayer. Directs PEX17, a peripheral component of the peroxisomal matrix protein translocation machinery, to peroxisomes. Stabilizes VPS1, a protein required for peroxisomal fission, at the peroxisomal membrane. Also acts in conjunction with PEX3 in the formation of peroxisomes from preperoxisomal compartments at the endoplasmic reticulum during de novo peroxisome synthesis, probably via the import of additional PMPs. The chain is Peroxisomal membrane protein import receptor PEX19 (PEX19) from Saccharomyces cerevisiae (strain ATCC 204508 / S288c) (Baker's yeast).